The following is a 160-amino-acid chain: Arginine repressor (160 aa).

Belongs to the ArgR family.

It localises to the cytoplasm. It participates in amino-acid biosynthesis; L-arginine biosynthesis [regulation]. In terms of biological role, regulates arginine biosynthesis genes. In Anaeromyxobacter dehalogenans (strain 2CP-1 / ATCC BAA-258), this protein is Arginine repressor.